A 126-amino-acid polypeptide reads, in one-letter code: MRHYEIVILVHPDQSSQVPAMVERYQSMIKEKDGKVHRLEDWGRRQLAYSIDKVHKAHYLLMNIESDQGVISELENAFRYNDAVIRSLILKRDHAITKSSLIMQGAEKGKSSSKKVAAEAEASEEA.

The tract at residues 104–126 (QGAEKGKSSSKKVAAEAEASEEA) is disordered.

The protein belongs to the bacterial ribosomal protein bS6 family.

Binds together with bS18 to 16S ribosomal RNA. This Coxiella burnetii (strain Dugway 5J108-111) protein is Small ribosomal subunit protein bS6.